A 482-amino-acid chain; its full sequence is Protein nucleotidyltransferase YdiU (482 aa).

8 residues coordinate ATP: G88, G90, R91, K111, D123, G124, R174, and R181. D250 (proton acceptor) is an active-site residue. 2 residues coordinate Mg(2+): N251 and D260. D260 lines the ATP pocket.

It belongs to the SELO family. Mg(2+) is required as a cofactor. It depends on Mn(2+) as a cofactor.

The catalysed reaction is L-seryl-[protein] + ATP = 3-O-(5'-adenylyl)-L-seryl-[protein] + diphosphate. It catalyses the reaction L-threonyl-[protein] + ATP = 3-O-(5'-adenylyl)-L-threonyl-[protein] + diphosphate. It carries out the reaction L-tyrosyl-[protein] + ATP = O-(5'-adenylyl)-L-tyrosyl-[protein] + diphosphate. The enzyme catalyses L-histidyl-[protein] + UTP = N(tele)-(5'-uridylyl)-L-histidyl-[protein] + diphosphate. The catalysed reaction is L-seryl-[protein] + UTP = O-(5'-uridylyl)-L-seryl-[protein] + diphosphate. It catalyses the reaction L-tyrosyl-[protein] + UTP = O-(5'-uridylyl)-L-tyrosyl-[protein] + diphosphate. In terms of biological role, nucleotidyltransferase involved in the post-translational modification of proteins. It can catalyze the addition of adenosine monophosphate (AMP) or uridine monophosphate (UMP) to a protein, resulting in modifications known as AMPylation and UMPylation. The chain is Protein nucleotidyltransferase YdiU from Cronobacter sakazakii (strain ATCC BAA-894) (Enterobacter sakazakii).